The following is a 56-amino-acid chain: UPF0391 membrane protein Bd1438 (56 aa).

2 consecutive transmembrane segments (helical) span residues 4–24 (AAIAFFIIAIVAYIFGASGVA) and 33–53 (ILLFVFLALAIISFVINLVSG).

This sequence belongs to the UPF0391 family.

It is found in the cell membrane. This is UPF0391 membrane protein Bd1438 from Bdellovibrio bacteriovorus (strain ATCC 15356 / DSM 50701 / NCIMB 9529 / HD100).